Here is a 196-residue protein sequence, read N- to C-terminus: ATP synthase subunit b (196 aa).

The helical transmembrane segment at 24–44 threads the bilayer; that stretch reads PLSELLIGTLSFALLVAFFFW.

The protein belongs to the ATPase B chain family. In terms of assembly, F-type ATPases have 2 components, F(1) - the catalytic core - and F(0) - the membrane proton channel. F(1) has five subunits: alpha(3), beta(3), gamma(1), delta(1), epsilon(1). F(0) has three main subunits: a(1), b(2) and c(10-14). The alpha and beta chains form an alternating ring which encloses part of the gamma chain. F(1) is attached to F(0) by a central stalk formed by the gamma and epsilon chains, while a peripheral stalk is formed by the delta and b chains.

The protein resides in the cell membrane. In terms of biological role, f(1)F(0) ATP synthase produces ATP from ADP in the presence of a proton or sodium gradient. F-type ATPases consist of two structural domains, F(1) containing the extramembraneous catalytic core and F(0) containing the membrane proton channel, linked together by a central stalk and a peripheral stalk. During catalysis, ATP synthesis in the catalytic domain of F(1) is coupled via a rotary mechanism of the central stalk subunits to proton translocation. Its function is as follows. Component of the F(0) channel, it forms part of the peripheral stalk, linking F(1) to F(0). This chain is ATP synthase subunit b, found in Frankia casuarinae (strain DSM 45818 / CECT 9043 / HFP020203 / CcI3).